Here is a 463-residue protein sequence, read N- to C-terminus: Ribulose bisphosphate carboxylase large chain (463 aa).

Lysine 5 carries the N6,N6,N6-trimethyllysine modification. Substrate contacts are provided by asparagine 114 and threonine 164. Catalysis depends on lysine 166, which acts as the Proton acceptor. Lysine 168 lines the substrate pocket. Mg(2+) is bound by residues lysine 192, aspartate 194, and glutamate 195. Lysine 192 is modified (N6-carboxylysine). The active-site Proton acceptor is histidine 285. Residues arginine 286, histidine 318, and serine 370 each contribute to the substrate site.

It belongs to the RuBisCO large chain family. Type I subfamily. Heterohexadecamer of 8 large chains and 8 small chains; disulfide-linked. The disulfide link is formed within the large subunit homodimers. It depends on Mg(2+) as a cofactor. The disulfide bond which can form in the large chain dimeric partners within the hexadecamer appears to be associated with oxidative stress and protein turnover.

Its subcellular location is the plastid. The protein resides in the chloroplast. The catalysed reaction is 2 (2R)-3-phosphoglycerate + 2 H(+) = D-ribulose 1,5-bisphosphate + CO2 + H2O. It carries out the reaction D-ribulose 1,5-bisphosphate + O2 = 2-phosphoglycolate + (2R)-3-phosphoglycerate + 2 H(+). In terms of biological role, ruBisCO catalyzes two reactions: the carboxylation of D-ribulose 1,5-bisphosphate, the primary event in carbon dioxide fixation, as well as the oxidative fragmentation of the pentose substrate in the photorespiration process. Both reactions occur simultaneously and in competition at the same active site. The polypeptide is Ribulose bisphosphate carboxylase large chain (Pelargonium grandiflorum (Geranium)).